Reading from the N-terminus, the 289-residue chain is Elongation factor Ts (289 aa).

Residues Thr-80–Val-83 form an involved in Mg(2+) ion dislocation from EF-Tu region.

Belongs to the EF-Ts family.

It is found in the cytoplasm. Functionally, associates with the EF-Tu.GDP complex and induces the exchange of GDP to GTP. It remains bound to the aminoacyl-tRNA.EF-Tu.GTP complex up to the GTP hydrolysis stage on the ribosome. The protein is Elongation factor Ts of Francisella tularensis subsp. tularensis (strain FSC 198).